The chain runs to 67 residues: uncharacterized protein (67 aa).

Helical transmembrane passes span 10 to 30 (EFFI…ITMW) and 40 to 60 (LMVG…WMVF).

This sequence belongs to the plectrovirus ORF10 family.

It is found in the host membrane. This is an uncharacterized protein from Spiroplasma citri (SpV1).